The following is a 137-amino-acid chain: Large ribosomal subunit protein uL16 (137 aa).

Residues 1 to 16 are compositionally biased toward basic residues; the sequence is MLQPKRTKFRKMQKGR. Residues 1–22 form a disordered region; sequence MLQPKRTKFRKMQKGRIRGEAK.

Belongs to the universal ribosomal protein uL16 family. In terms of assembly, part of the 50S ribosomal subunit.

Binds 23S rRNA and is also seen to make contacts with the A and possibly P site tRNAs. The polypeptide is Large ribosomal subunit protein uL16 (Jannaschia sp. (strain CCS1)).